Here is a 249-residue protein sequence, read N- to C-terminus: Diaminopimelate epimerase (249 aa).

Residues asparagine 11 and asparagine 60 each contribute to the substrate site. The active-site Proton donor is the cysteine 69. Substrate is bound by residues 70–71, asparagine 164, and 182–183; these read GN and ER. The active-site Proton acceptor is cysteine 192. Position 193–194 (193–194) interacts with substrate; it reads GT.

Belongs to the diaminopimelate epimerase family. As to quaternary structure, homodimer.

It localises to the cytoplasm. It catalyses the reaction (2S,6S)-2,6-diaminopimelate = meso-2,6-diaminopimelate. The protein operates within amino-acid biosynthesis; L-lysine biosynthesis via DAP pathway; DL-2,6-diaminopimelate from LL-2,6-diaminopimelate: step 1/1. Its function is as follows. Catalyzes the stereoinversion of LL-2,6-diaminopimelate (L,L-DAP) to meso-diaminopimelate (meso-DAP), a precursor of L-lysine and an essential component of the bacterial peptidoglycan. In Campylobacter lari (strain RM2100 / D67 / ATCC BAA-1060), this protein is Diaminopimelate epimerase.